Reading from the N-terminus, the 2514-residue chain is Probable polyketide synthase 8/35 (2514 aa).

The Ketosynthase family 3 (KS3) domain maps to 11–442; that stretch reads DKGVAIVGVG…GSNCCLLISE (432 aa). Residues Cys181, His323, and His362 each act as for beta-ketoacyl synthase activity in the active site. The tract at residues 635–668 is acyl/malonyl transferase; it reads GVNPSFILGHSLGEISAAYCSGMIDLDTFCYTVY. The active-site For acyl/malonyl transferase activity is Ser645. Residues 925 to 1047 form an N-terminal hotdog fold region; the sequence is IDHLGLSNSY…ANFQLLDHGN (123 aa). Positions 925-1209 constitute a PKS/mFAS DH domain; it reads IDHLGLSNSY…FKSLIPIKHS (285 aa). Catalysis depends on His959, which acts as the Proton acceptor; for dehydratase activity. The C-terminal hotdog fold stretch occupies residues 1064–1209; the sequence is NLSKLTKNEL…FKSLIPIKHS (146 aa). Asp1122 functions as the Proton donor; for dehydratase activity in the catalytic mechanism. Residues 2431 to 2508 form the Carrier domain; sequence IGNKNIDELF…ISIKMILNSL (78 aa). Ser2468 bears the O-(pantetheine 4'-phosphoryl)serine mark.

The cofactor is pantetheine 4'-phosphate.

Probable polyketide synthase. The sequence is that of Probable polyketide synthase 8/35 (pks8) from Dictyostelium discoideum (Social amoeba).